Consider the following 183-residue polypeptide: MSQPAKVLLLYAHPESQDSVANWVLLKPATQLSNVTVHDLYAHYPDFFIDIPREQALLREHEVIVFQHPLYTYSCPALLKEWLDRVLSRGFASGPGGNQLAGKYWRSVITTGEPESAYRYDALNRYPMSDVLRPFELAAGMCRMHWLSPIIIYWARRQSAQELASHARAYGDWLANPLSPGGC.

This sequence belongs to the NAD(P)H dehydrogenase (quinone) family. KefG subfamily. In terms of assembly, interacts with KefB.

The protein resides in the cell inner membrane. The catalysed reaction is a quinone + NADH + H(+) = a quinol + NAD(+). It catalyses the reaction a quinone + NADPH + H(+) = a quinol + NADP(+). Regulatory subunit of a potassium efflux system that confers protection against electrophiles. Required for full activity of KefB. The polypeptide is Glutathione-regulated potassium-efflux system ancillary protein KefG (Escherichia coli O6:K15:H31 (strain 536 / UPEC)).